The chain runs to 350 residues: Protein RecA (350 aa).

An ATP-binding site is contributed by 67-74 (GPESSGKT).

The protein belongs to the RecA family.

Its subcellular location is the cytoplasm. Its function is as follows. Can catalyze the hydrolysis of ATP in the presence of single-stranded DNA, the ATP-dependent uptake of single-stranded DNA by duplex DNA, and the ATP-dependent hybridization of homologous single-stranded DNAs. It interacts with LexA causing its activation and leading to its autocatalytic cleavage. In Wolinella succinogenes (strain ATCC 29543 / DSM 1740 / CCUG 13145 / JCM 31913 / LMG 7466 / NCTC 11488 / FDC 602W) (Vibrio succinogenes), this protein is Protein RecA.